The primary structure comprises 535 residues: Arylsulfatase K (535 aa).

Positions 1–21 (MGSGGPLLLLRGLLLVGAAYC) are cleaved as a signal peptide. Residues aspartate 41 and cysteine 81 each coordinate Ca(2+). Residue cysteine 81 is the Nucleophile of the active site. The residue at position 81 (cysteine 81) is a 3-oxoalanine (Cys). Lysine 129 contributes to the substrate binding site. Asparagine 194 carries an N-linked (GlcNAc...) asparagine glycan. Residue histidine 252 coordinates substrate. A glycan (N-linked (GlcNAc...) asparagine) is linked at asparagine 263. Residues aspartate 314 and histidine 315 each coordinate Ca(2+). 3 N-linked (GlcNAc...) asparagine glycosylation sites follow: asparagine 376, asparagine 414, and asparagine 499.

It belongs to the sulfatase family. It depends on Ca(2+) as a cofactor. Post-translationally, the conversion to 3-oxoalanine (also known as C-formylglycine, FGly), of a serine or cysteine residue in prokaryotes and of a cysteine residue in eukaryotes, is critical for catalytic activity.

Its subcellular location is the secreted. The protein localises to the lysosome. The enzyme catalyses an aryl sulfate + H2O = a phenol + sulfate + H(+). It carries out the reaction Hydrolysis of the 2-sulfate groups of the 2-O-sulfo-D-glucuronate residues of chondroitin sulfate, heparin and heparitin sulfate.. Catalyzes the hydrolysis of pseudosubstrates such as p-nitrocatechol sulfate and p-nitrophenyl sulfate. Catalyzes the hydrolysis of the 2-sulfate groups of the 2-O-sulfo-D-glucuronate residues of chondroitin sulfate, heparin and heparitin sulfate. Acts selectively on 2-sulfoglucuronate and lacks activity against 2-sulfoiduronate. This Gallus gallus (Chicken) protein is Arylsulfatase K (ARSK).